A 66-amino-acid polypeptide reads, in one-letter code: Putative ankyrin repeat protein RF_pd14 (66 aa).

The stretch at 14–66 (KLNQKLMRAAATGDIEAVQKLVLRGADIYCRDHQGDTALSLAAGSGYLDILDI) is one ANK repeat.

This chain is Putative ankyrin repeat protein RF_pd14, found in Rickettsia felis (strain ATCC VR-1525 / URRWXCal2) (Rickettsia azadi).